A 235-amino-acid polypeptide reads, in one-letter code: Proteasome subunit alpha (235 aa).

It belongs to the peptidase T1A family. As to quaternary structure, the 20S proteasome core is composed of 14 alpha and 14 beta subunits that assemble into four stacked heptameric rings, resulting in a barrel-shaped structure. The two inner rings, each composed of seven catalytic beta subunits, are sandwiched by two outer rings, each composed of seven alpha subunits. The catalytic chamber with the active sites is on the inside of the barrel. Has a gated structure, the ends of the cylinder being occluded by the N-termini of the alpha-subunits. Is capped by the proteasome-associated ATPase, ARC.

The protein localises to the cytoplasm. The protein operates within protein degradation; proteasomal Pup-dependent pathway. The formation of the proteasomal ATPase ARC-20S proteasome complex, likely via the docking of the C-termini of ARC into the intersubunit pockets in the alpha-rings, may trigger opening of the gate for substrate entry. Interconversion between the open-gate and close-gate conformations leads to a dynamic regulation of the 20S proteasome proteolysis activity. In terms of biological role, component of the proteasome core, a large protease complex with broad specificity involved in protein degradation. This is Proteasome subunit alpha from Arthrobacter sp. (strain FB24).